Consider the following 356-residue polypeptide: DNA polymerase IV (356 aa).

The UmuC domain occupies 1-188; it reads MDTSRKIIHI…IPVTKFYGVG (188 aa). Positions 11 and 106 each coordinate Mg(2+). Glu107 is a catalytic residue.

The protein belongs to the DNA polymerase type-Y family. Monomer. The cofactor is Mg(2+).

It is found in the cytoplasm. The catalysed reaction is DNA(n) + a 2'-deoxyribonucleoside 5'-triphosphate = DNA(n+1) + diphosphate. Functionally, poorly processive, error-prone DNA polymerase involved in untargeted mutagenesis. Copies undamaged DNA at stalled replication forks, which arise in vivo from mismatched or misaligned primer ends. These misaligned primers can be extended by PolIV. Exhibits no 3'-5' exonuclease (proofreading) activity. May be involved in translesional synthesis, in conjunction with the beta clamp from PolIII. The polypeptide is DNA polymerase IV (Listeria monocytogenes serotype 4b (strain F2365)).